The following is an 83-amino-acid chain: Mu-theraphotoxin-Hhn2b 3 (83 aa).

Positions 1-21 (MKASMFLALAGLVLLFVVCYA) are cleaved as a signal peptide. A propeptide spanning residues 22-48 (SESEEKEFPRELISKIFAVDDFKGEVR) is cleaved from the precursor. 3 disulfides stabilise this stretch: Cys50/Cys65, Cys57/Cys70, and Cys64/Cys77. Residue Leu81 is modified to Leucine amide.

Belongs to the neurotoxin 10 (Hwtx-1) family. 14 (Hntx-1) subfamily. Monomer. Expressed by the venom gland.

It is found in the secreted. Weakly blocks the rat SCN2A/SCN1B (Nav1.2/beta-1) sodium channel (IC(50)=68 uM) and the insect sodium channel para/tipE (IC(50)=4.3 uM), without altering the activation or inactivation kinetics (depressant toxin). This Cyriopagopus hainanus (Chinese bird spider) protein is Mu-theraphotoxin-Hhn2b 3.